The primary structure comprises 280 residues: Large ribosomal subunit protein uL2 (280 aa).

3 disordered regions span residues 1–20 (MAIR…SVSM), 29–58 (PEKS…GGGH), and 225–280 (VMNP…NKKR). Residues 45 to 58 (SHGHITTRHRGGGH) are compositionally biased toward basic residues. Residues 253 to 269 (KEGRTRRPKRYSDDMIV) are compositionally biased toward basic and acidic residues. Basic residues predominate over residues 270-280 (RRRRANKNKKR).

It belongs to the universal ribosomal protein uL2 family. Part of the 50S ribosomal subunit. Forms a bridge to the 30S subunit in the 70S ribosome.

In terms of biological role, one of the primary rRNA binding proteins. Required for association of the 30S and 50S subunits to form the 70S ribosome, for tRNA binding and peptide bond formation. It has been suggested to have peptidyltransferase activity; this is somewhat controversial. Makes several contacts with the 16S rRNA in the 70S ribosome. The sequence is that of Large ribosomal subunit protein uL2 from Corynebacterium efficiens (strain DSM 44549 / YS-314 / AJ 12310 / JCM 11189 / NBRC 100395).